The following is a 292-amino-acid chain: 4-hydroxy-tetrahydrodipicolinate synthase (292 aa).

A pyruvate-binding site is contributed by T48. Y136 serves as the catalytic Proton donor/acceptor. The Schiff-base intermediate with substrate role is filled by K164. A pyruvate-binding site is contributed by I204.

This sequence belongs to the DapA family. Homotetramer; dimer of dimers.

It localises to the cytoplasm. It catalyses the reaction L-aspartate 4-semialdehyde + pyruvate = (2S,4S)-4-hydroxy-2,3,4,5-tetrahydrodipicolinate + H2O + H(+). The protein operates within amino-acid biosynthesis; L-lysine biosynthesis via DAP pathway; (S)-tetrahydrodipicolinate from L-aspartate: step 3/4. Catalyzes the condensation of (S)-aspartate-beta-semialdehyde [(S)-ASA] and pyruvate to 4-hydroxy-tetrahydrodipicolinate (HTPA). The sequence is that of 4-hydroxy-tetrahydrodipicolinate synthase from Acetivibrio thermocellus (strain ATCC 27405 / DSM 1237 / JCM 9322 / NBRC 103400 / NCIMB 10682 / NRRL B-4536 / VPI 7372) (Clostridium thermocellum).